A 387-amino-acid chain; its full sequence is Na(+)/H(+)-K(+) antiporter GerN (387 aa).

Transmembrane regions (helical) follow at residues 29–49 (PSVLGKLIVGIVIGPAVLGWI), 54–74 (LLTQLSNVGVILLMFMAGLET), 87–107 (LAVALGGIILPFVGGYVSGLV), 114–134 (NAVFLGLLLCATSVSISVQTL), 149–169 (LGAAVFDDILVVILLAFAMSF), 175–195 (VNLTMVILKKVVFFASIILIG), 219–239 (ALIICFSFAYFGELLGIAGII), 263–283 (PIAYAMFVPVFFVSIGMNITF), 290–310 (IWFILALTVIAVLTKLIGCGF), 324–344 (IIGAGMVSRGEVALIIAGTGL), and 347–367 (GLLAQDYFTAIVIVVILTTMI).

Belongs to the monovalent cation:proton antiporter 2 (CPA2) transporter (TC 2.A.37) family.

The protein resides in the membrane. Its function is as follows. Na(+)/H(+) antiporter that extrudes sodium in exchange for external protons. Can also use potassium as a coupling ion, without completely replacing H(+). This Na(+)/H(+)-K(+) antiport is much more rapid than Na(+)/H(+) antiport. Can also extrude lithium. Important for the inosine-dependent germination of spores. This is Na(+)/H(+)-K(+) antiporter GerN (gerN) from Bacillus cereus.